Reading from the N-terminus, the 53-residue chain is UPF0391 membrane protein PSEEN0090 (53 aa).

2 helical membrane passes run 4-24 (WAIT…GGIA) and 29-49 (GIAK…FFFG).

It belongs to the UPF0391 family.

It is found in the cell membrane. The polypeptide is UPF0391 membrane protein PSEEN0090 (Pseudomonas entomophila (strain L48)).